Consider the following 458-residue polypeptide: Flavonol 3-O-glucosyltransferase F3GT2 (458 aa).

The Proton acceptor role is filled by His-20. His-20 contacts an anthocyanidin. Residue Asp-119 is the Charge relay of the active site. Thr-141 is a binding site for UDP-alpha-D-glucose. Residue His-150 participates in an anthocyanidin binding. Residues Ala-333, Gln-335, His-350, Trp-353, Asn-354, Ser-355, and Glu-358 each coordinate UDP-alpha-D-glucose. Residue Gly-373 participates in an anthocyanidin binding. UDP-alpha-D-glucose is bound by residues Asp-374 and Gln-375.

It belongs to the UDP-glycosyltransferase family. As to expression, expressed in ovaries.

It carries out the reaction a flavonol + UDP-alpha-D-glucose = a flavonol 3-O-beta-D-glucoside + UDP + H(+). It participates in flavonoid metabolism. Functionally, catalyzes the glucosylation of quercetin. Preferentially uses UDP-glucose as sugar donor, but is also able to use UDP-gal and UDP-xyl. Is probably not required for the accumulation of anthocyanin in red-fleshed kiwifruit varieties. The protein is Flavonol 3-O-glucosyltransferase F3GT2 of Actinidia chinensis var. chinensis (Chinese soft-hair kiwi).